A 631-amino-acid chain; its full sequence is Golgin subfamily A member 8A (631 aa).

The span at 1 to 20 (MLPVDGEERKSEGSDTEGDR) shows a compositional bias: basic and acidic residues. 4 disordered regions span residues 1 to 103 (MLPV…QEQA), 127 to 154 (KKQV…LEGQ), 426 to 447 (TSAE…ESSG), and 488 to 520 (PGDS…GAAG). Over residues 78-92 (SLYLSPKSSSASSSL) the composition is skewed to low complexity. Over residues 93-103 (HARQSPCQEQA) the composition is skewed to polar residues. Residues 110–468 (SIKISRLNDT…REHVEKLELG (359 aa)) are a coiled coil. Residues 128-152 (KQVEHQLEEEKKANNEKQKAERELE) are compositionally biased toward basic and acidic residues. Gly residues predominate over residues 497-510 (PGGGHHQAGPGQGG). The interval 519 to 631 (AGDGVAACGS…CWAWLPRRRR (113 aa)) is golgi-targeting domain.

This sequence belongs to the GOLGA8 family.

Its subcellular location is the golgi apparatus. The protein localises to the golgi stack membrane. May be involved in maintaining Golgi structure. The polypeptide is Golgin subfamily A member 8A (GOLGA8A) (Homo sapiens (Human)).